A 276-amino-acid polypeptide reads, in one-letter code: Nickel import system permease protein NikC (276 aa).

The next 5 helical transmembrane spans lie at 10–30 (LIFFVFVAFIFVVIVLQFFVS), 73–93 (LFVTVLTLIAIVVIGVTLGLF), 108–128 (FIDVGLSIPEFIIMIALASFF), 186–206 (IIPAIIVLMVVDFGKIILYIS), and 238–258 (IMLIAPASVIAITILIFNLTG). One can recognise an ABC transmembrane type-1 domain in the interval 69–258 (ARSTLFVTVL…ITILIFNLTG (190 aa)).

It belongs to the binding-protein-dependent transport system permease family. OppBC subfamily. In terms of assembly, the complex is composed of two ATP-binding proteins (NikD and NikE), two transmembrane proteins (NikB and NikC) and a solute-binding protein (NikA).

The protein localises to the cell membrane. Its function is as follows. Part of the ABC transporter complex NikABCDE (Opp2) involved in nickel import. Probably responsible for the translocation of the substrate across the membrane. The sequence is that of Nickel import system permease protein NikC from Staphylococcus aureus (strain USA300).